The primary structure comprises 72 residues: MSKTDVVEIEGTVIEKLPNAMFSVELENGHRVLAHISGKLRMNFIKIVPGDKVTLELSPYDLTKGRIIWRDK.

The S1-like domain occupies 1–72; sequence MSKTDVVEIE…TKGRIIWRDK (72 aa).

It belongs to the IF-1 family. In terms of assembly, component of the 30S ribosomal translation pre-initiation complex which assembles on the 30S ribosome in the order IF-2 and IF-3, IF-1 and N-formylmethionyl-tRNA(fMet); mRNA recruitment can occur at any time during PIC assembly.

Its subcellular location is the cytoplasm. In terms of biological role, one of the essential components for the initiation of protein synthesis. Stabilizes the binding of IF-2 and IF-3 on the 30S subunit to which N-formylmethionyl-tRNA(fMet) subsequently binds. Helps modulate mRNA selection, yielding the 30S pre-initiation complex (PIC). Upon addition of the 50S ribosomal subunit IF-1, IF-2 and IF-3 are released leaving the mature 70S translation initiation complex. In Lachnoclostridium phytofermentans (strain ATCC 700394 / DSM 18823 / ISDg) (Clostridium phytofermentans), this protein is Translation initiation factor IF-1.